The sequence spans 187 residues: Elongation factor P (187 aa).

The protein belongs to the elongation factor P family.

The protein resides in the cytoplasm. It functions in the pathway protein biosynthesis; polypeptide chain elongation. Involved in peptide bond synthesis. Stimulates efficient translation and peptide-bond synthesis on native or reconstituted 70S ribosomes in vitro. Probably functions indirectly by altering the affinity of the ribosome for aminoacyl-tRNA, thus increasing their reactivity as acceptors for peptidyl transferase. This chain is Elongation factor P, found in Prochlorococcus marinus (strain NATL2A).